The following is a 98-amino-acid chain: MPLISTNILLAFITALLGVLIYRSHLMSSLLCLEGMMLSMFILVSLTTMNLHFTLANIAPLILLVFAACEAAVGLALLVMVSNTYGMDYIQNLNLLQC.

The next 3 membrane-spanning stretches (helical) occupy residues 1-21 (MPLI…GVLI), 26-46 (LMSS…LVSL), and 61-81 (LILL…LVMV).

Belongs to the complex I subunit 4L family. As to quaternary structure, core subunit of respiratory chain NADH dehydrogenase (Complex I) which is composed of 45 different subunits.

It is found in the mitochondrion inner membrane. The enzyme catalyses a ubiquinone + NADH + 5 H(+)(in) = a ubiquinol + NAD(+) + 4 H(+)(out). In terms of biological role, core subunit of the mitochondrial membrane respiratory chain NADH dehydrogenase (Complex I) which catalyzes electron transfer from NADH through the respiratory chain, using ubiquinone as an electron acceptor. Part of the enzyme membrane arm which is embedded in the lipid bilayer and involved in proton translocation. The sequence is that of NADH-ubiquinone oxidoreductase chain 4L (MT-ND4L) from Nycticebus coucang (Slow loris).